We begin with the raw amino-acid sequence, 98 residues long: MGNTKTKDRQYQSNSSQPTNTSAPVLLRRQAEPSLYGRHNCRCCWFADTNLVNCSNHYLCLKCLNTMLRRSNLCDICGEELPTTIIVPVEPSAPLPGQ.

Residues M1–Q10 are compositionally biased toward basic and acidic residues. Residues M1–L26 form a disordered region. G2 carries the N-myristoyl glycine; by host lipid modification. Residues Y11–A23 are compositionally biased toward polar residues. An RING-type; atypical zinc finger spans residues C41–C77. The PTAP/PSAP motif motif lies at P91–P94.

Belongs to the arenaviridae Z protein family. As to quaternary structure, interacts with protein NP; this interaction probably directs the encapsidated genome to budding sites. Interacts (via RING domain) with polymerase L; this interaction inhibits viral transcription and replication, Z partially blocks the product exit tunnel for the releasing nascent RNA product. Interacts with the glycoprotein complex; this interaction plays a role in virion budding. Interacts with host eIF4E; this interaction results in eIF4E reduced affinity for its substrate, the 5'-m7 G cap structure. Interacts (via late-budding domain) with host TSG101; this interaction is essential for budding and release of viral particles. Interacts with host RPLP0; this interaction may serve to load ribosome-like particles inside the virion. Interacts with host PML; this interaction induces PML bodies redistribution in the cytoplasm upon viral infection. In terms of processing, myristoylation is required for the role of RING finger protein Z in assembly and budding.

The protein localises to the virion. Its subcellular location is the host cytoplasm. It localises to the host perinuclear region. The protein resides in the host cell membrane. Plays a crucial role in virion assembly and budding. Expressed late in the virus life cycle, it acts as an inhibitor of viral transcription and RNA synthesis by interacting with the viral polymerase L. Presumably recruits the NP encapsidated genome to cellular membranes at budding sites via direct interaction with NP. Plays critical roles in the final steps of viral release by interacting with host TSG101, a member of the vacuolar protein-sorting pathway and using other cellular host proteins involved in vesicle formation pathway. The budding of the virus progeny occurs after association of protein Z with the viral glycoprotein complex SSP-GP1-GP2 at the cell periphery, step that requires myristoylation of protein Z. Also selectively represses protein production by associating with host eIF4E. In cell-based minigenome assay, has an inhibitory effect on the ribonucleoprotein machinery (vRNP), which is responsible for the replication and transcription of the viral genome. The protein is RING finger protein Z of Chapare mammarenavirus (isolate Human/Bolivia/810419/2003).